The primary structure comprises 353 residues: GTPase Obg (353 aa).

One can recognise an Obg domain in the interval 1 to 159; it reads MKFLDEAKVY…RWIWLRLKLI (159 aa). The OBG-type G domain maps to 160–327; that stretch reads ADAGLVGLPN…VLRALVAVIG (168 aa). GTP is bound by residues 166–173, 191–195, 212–215, 279–282, and 308–310; these read GLPNAGKS, FTTLH, DIPG, NKID, and SGV. Mg(2+)-binding residues include S173 and T193.

It belongs to the TRAFAC class OBG-HflX-like GTPase superfamily. OBG GTPase family. In terms of assembly, monomer. It depends on Mg(2+) as a cofactor.

It is found in the cytoplasm. An essential GTPase which binds GTP, GDP and possibly (p)ppGpp with moderate affinity, with high nucleotide exchange rates and a fairly low GTP hydrolysis rate. Plays a role in control of the cell cycle, stress response, ribosome biogenesis and in those bacteria that undergo differentiation, in morphogenesis control. This is GTPase Obg from Rhodopseudomonas palustris (strain TIE-1).